Reading from the N-terminus, the 130-residue chain is Acyl carrier protein 2, chloroplastic (130 aa).

A chloroplast-targeting transit peptide spans 1 to 48; that stretch reads MASITGSSVSFKCAPLQSSFNSKNYALKSSVTFWRRTPVMPRGLSVSC. A Carrier domain is found at 52–127; it reads PEMVTKVSDI…EAADMIEALQ (76 aa). The residue at position 87 (serine 87) is an O-(pantetheine 4'-phosphoryl)serine.

Belongs to the acyl carrier protein (ACP) family. 4'-phosphopantetheine is transferred from CoA to a specific serine of apo-ACP by acpS. This modification is essential for activity because fatty acids are bound in thioester linkage to the sulfhydryl of the prosthetic group. As to expression, roots, leaves and seeds.

Its subcellular location is the plastid. It localises to the chloroplast. It functions in the pathway lipid metabolism; fatty acid biosynthesis. In terms of biological role, carrier of the growing fatty acid chain in fatty acid biosynthesis. The chain is Acyl carrier protein 2, chloroplastic (ACL1.2) from Spinacia oleracea (Spinach).